Consider the following 385-residue polypeptide: tRNA pseudouridine synthase D (385 aa).

The Nucleophile role is filled by D65. Residues 143 to 345 (GCENYFGEQR…SDGVRKAFFK (203 aa)) form the TRUD domain.

This sequence belongs to the pseudouridine synthase TruD family.

It carries out the reaction uridine(13) in tRNA = pseudouridine(13) in tRNA. Functionally, responsible for synthesis of pseudouridine from uracil-13 in transfer RNAs. The sequence is that of tRNA pseudouridine synthase D from Aquifex aeolicus (strain VF5).